Here is a 537-residue protein sequence, read N- to C-terminus: Chaperonin GroEL (537 aa).

ATP contacts are provided by residues 29–32 (TLGP), 86–90 (DGTTT), Gly413, and Asp492.

The protein belongs to the chaperonin (HSP60) family. As to quaternary structure, forms a cylinder of 14 subunits composed of two heptameric rings stacked back-to-back. Interacts with the co-chaperonin GroES.

It localises to the cytoplasm. It carries out the reaction ATP + H2O + a folded polypeptide = ADP + phosphate + an unfolded polypeptide.. Functionally, together with its co-chaperonin GroES, plays an essential role in assisting protein folding. The GroEL-GroES system forms a nano-cage that allows encapsulation of the non-native substrate proteins and provides a physical environment optimized to promote and accelerate protein folding. The polypeptide is Chaperonin GroEL (Dehalococcoides mccartyi (strain CBDB1)).